The primary structure comprises 579 residues: Nuclear receptor subfamily 1 group D member 2 (579 aa).

The required for phosphorylation by CSNK1E and cytoplasmic localization stretch occupies residues 1-60 (MEVNAGGVIAYISSSSSASSPASCHSEGSENSFQSSSSSVPSSPNSSNSDTNGNPKNGDL). The segment at 1–99 (MEVNAGGVIA…HSGVTKFSGM (99 aa)) is modulating. Low complexity predominate over residues 13–54 (SSSSSASSPASCHSEGSENSFQSSSSSVPSSPNSSNSDTNGN). Residues 13–61 (SSSSSASSPASCHSEGSENSFQSSSSSVPSSPNSSNSDTNGNPKNGDLA) form a disordered region. Serine 46 carries the phosphoserine; by GSK3-beta modification. A DNA-binding region (nuclear receptor) is located at residues 100-176 (VLLCKVCGDV…VGMSRDAVRF (77 aa)). 2 NR C4-type zinc fingers span residues 103-123 (CKVCGDVASGFHYGVHACEGC) and 140-164 (CLKNENCSIMRMNRNRCQQCRFKKC). An N6-acetyllysine; by KAT5 mark is found at lysine 162 and lysine 163. The tract at residues 222–250 (PAQEQLRPKPQLEQENIKSSSPPSSDFAK) is disordered. The segment covering 227 to 237 (LRPKPQLEQEN) has biased composition (basic and acidic residues). Cystine bridges form between cysteine 337–cysteine 343 and cysteine 374–cysteine 384. One can recognise an NR LBD domain in the interval 369 to 579 (KNSYLCNTGG…EELLAFKVHP (211 aa)). Heme contacts are provided by cysteine 384 and histidine 568. An interaction with ZNHIT1 region spans residues 397 to 579 (SGHEIWEEFS…EELLAFKVHP (183 aa)).

It belongs to the nuclear hormone receptor family. NR1 subfamily. As to quaternary structure, binds DNA as a monomer or a homodimer. Interacts with NCOA5 coactivator, leading to a strong increase of transcription of target genes. Interacts (via N-terminus) with KAT5. Interacts (via C-terminus) with HDAC1. Interacts with ZNHIT1. Interacts with SIAH2. In terms of processing, deacetylated by HDAC1. Acetylation and deacetylation regulate its transcriptional regulatory activity. Post-translationally, under more reducing intracellular redox conditions, Cys-384 is in its heme-bound state, which is optimal for recruitment of the NCOR1/HDAC3 corepressor complex and repression of target genes. When subjected to oxidative stress conditions, Cys-384 undergoes oxidation to form a disulfide bridge with Cys-374, also triggering a ligand switch that results in release of bound heme and derepression of target genes. Ubiquitinated by SIAH2; leading to proteasomal degradation. In terms of processing, phosphorylated by CSNK1E; phosphorylation enhances its cytoplasmic localization. In terms of tissue distribution, widely expressed. Expressed at high levels in the liver, adipose tissue, skeletal muscle and brain. Expression oscillates diurnally in the suprachiasmatic nucleus (SCN) of the hypothalamus as well as in peripheral tissues.

The protein resides in the nucleus. It is found in the cytoplasm. With respect to regulation, the heme-bound form can bind gaseous signaling molecules such as CO and nitric oxide (NO) and NO can reverse its transcriptional repressor activity. Functionally, transcriptional repressor which coordinates circadian rhythm and metabolic pathways in a heme-dependent manner. Integral component of the complex transcription machinery that governs circadian rhythmicity and forms a critical negative limb of the circadian clock by directly repressing the expression of core clock components BMAL1 and CLOCK. Also regulates genes involved in metabolic functions, including lipid metabolism and the inflammatory response. Acts as a receptor for heme which stimulates its interaction with the NCOR1/HDAC3 corepressor complex, enhancing transcriptional repression. Recognizes two classes of DNA response elements within the promoter of its target genes and can bind to DNA as either monomers or homodimers, depending on the nature of the response element. Binds as a monomer to a response element composed of the consensus half-site motif 5'-[A/G]GGTCA-3' preceded by an A/T-rich 5' sequence (RevRE), or as a homodimer to a direct repeat of the core motif spaced by two nuclegotides (RevDR-2). Acts as a potent competitive repressor of ROR alpha (RORA) function and also negatively regulates the expression of NR1D1. Regulates lipid and energy homeostasis in the skeletal muscle via repression of genes involved in lipid metabolism and myogenesis including: CD36, FABP3, FABP4, UCP3, SCD1 and MSTN. Regulates hepatic lipid metabolism via the repression of APOC3. Represses gene expression at a distance in macrophages by inhibiting the transcription of enhancer-derived RNAs (eRNAs). In addition to its activity as a repressor, can also act as a transcriptional activator. Acts as a transcriptional activator of the sterol regulatory element-binding protein 1 (SREBF1) and the inflammatory mediator interleukin-6 (IL6) in the skeletal muscle. Plays a role in the regulation of circadian sleep/wake cycle; essential for maintaining wakefulness during the dark phase or active period. Key regulator of skeletal muscle mitochondrial function; negatively regulates the skeletal muscle expression of core clock genes and genes involved in mitochondrial biogenesis, fatty acid beta-oxidation and lipid metabolism. May play a role in the circadian control of neutrophilic inflammation in the lung. In Homo sapiens (Human), this protein is Nuclear receptor subfamily 1 group D member 2.